A 236-amino-acid chain; its full sequence is 2-C-methyl-D-erythritol 4-phosphate cytidylyltransferase (236 aa).

Belongs to the IspD/TarI cytidylyltransferase family. IspD subfamily. In terms of assembly, homodimer.

The catalysed reaction is 2-C-methyl-D-erythritol 4-phosphate + CTP + H(+) = 4-CDP-2-C-methyl-D-erythritol + diphosphate. Its pathway is isoprenoid biosynthesis; isopentenyl diphosphate biosynthesis via DXP pathway; isopentenyl diphosphate from 1-deoxy-D-xylulose 5-phosphate: step 2/6. In terms of biological role, catalyzes the formation of 4-diphosphocytidyl-2-C-methyl-D-erythritol from CTP and 2-C-methyl-D-erythritol 4-phosphate (MEP). The chain is 2-C-methyl-D-erythritol 4-phosphate cytidylyltransferase from Salmonella schwarzengrund (strain CVM19633).